We begin with the raw amino-acid sequence, 427 residues long: Peptidase B (427 aa).

Mn(2+) contacts are provided by Lys195 and Asp200. Lys207 is a catalytic residue. Asp218, Asp277, and Glu279 together coordinate Mn(2+). Arg281 is an active-site residue.

Belongs to the peptidase M17 family. As to quaternary structure, homohexamer. Mn(2+) serves as cofactor.

It localises to the cytoplasm. It carries out the reaction Release of an N-terminal amino acid, Xaa, from a peptide or arylamide. Xaa is preferably Glu or Asp but may be other amino acids, including Leu, Met, His, Cys and Gln.. Functionally, probably plays an important role in intracellular peptide degradation. This chain is Peptidase B, found in Escherichia coli O7:K1 (strain IAI39 / ExPEC).